An 865-amino-acid polypeptide reads, in one-letter code: MYLYIETLKQRLDAINQLRLERAFASMSDVFKQVYGLIPVLLHYHHPQLPGYIQGNVPHGTCFFEPDDVQRQWVNKLTNASCDEPMNGYTSGELPITGIYSMGSTSSIGQSHCSDIDIWVCHQSWLDQDERARLQRKCLLIEQWAGELGIDVTFFLIDENRFRHHASGSLGGEDCGSTQHILLLDEFYRTAVRLAGKRLLWTMVPVEEEYHYDEYVNSLYAQGVLTPNEWLDLGGLGELSAEEYFGASLWQLYKSVDSPYKAVLKSILLEAYSADYPNGKLLALEMKQHLHRGEIVNYGLDAYCMMLERVTRYLVSINDLTRLDLIRRCFYLKVCEKLSNEKNENEPAGWRRQVLSQLVTQWQWDHERLAILDNRDSWKIERVRNAHNELLDTMMQSYRNLIRFARRNNLSVSASPQDIGVLTRKLYAAFEALPGKVTLVNPQISPDLSEPHLTFIYVPPGRANRSGWYLYNRAPDFAHIVGHQPLEYNRYLNKLVAWSYFNGLLTKDSQVYIHQGDSSCDEIKLHELVRDISSHFPIRLPAPTPKALYSPCEIRHLAIIVNLEVDPTERFSDQVVHFDFRKLDVFSFGEEEQCLIGSIDLLYRNSWNEVRTLHFNGTQSMLESLKTILGKMHQDAAPPASVEVFCYSQHLRGLIRTRVQQLVSECIELRLSTNRLEPGRFKALRIAGQTWGLFFERLNVSVQKLENAIEFYGAISYNKLHGLPVKLGKDARYLPAVIDGFACEGIIQFFFETTEDNNVFNIYILDEANRVEIYSHCEGSKEELVKDVSRFYSSSHDRFTYGSSFINFNLPQFYQIVKVDGATQVLPFAGGSFGKLSDLGKTAPKEEMSTKPIQGFNDYQAVHHH.

The segment at 1-540 (MYLYIETLKQ…DISSHFPIRL (540 aa)) is catalytic. The tract at residues 546–865 (KALYSPCEIR…FNDYQAVHHH (320 aa)) is regulatory.

It belongs to the adenylyl cyclase class-1 family.

Its subcellular location is the cytoplasm. The enzyme catalyses ATP = 3',5'-cyclic AMP + diphosphate. The sequence is that of Adenylate cyclase (cya) from Proteus mirabilis.